Here is a 638-residue protein sequence, read N- to C-terminus: Cytoplasmic dynein 1 intermediate chain 2 (638 aa).

Basic and acidic residues-rich tracts occupy residues 1-13 (MSDKSELKAELER) and 20-43 (QIREEKKRKEEERKKKETDQKKEA). Disordered stretches follow at residues 1–135 (MSDK…GRGP) and 154–209 (VTYT…HELT). At S2 the chain carries N-acetylserine. Position 51 is a diphosphoserine (S51). S51 and S90 each carry phosphoserine. Low complexity predominate over residues 88 to 97 (PSSKSVSTPS). A Phosphothreonine modification is found at T95. Phosphoserine is present on residues S97, S101, and S104. Residues 133–165 (RGPIKLGMAKITQVDFPPREIVTYTKETQTPVT) are interaction with DYNLT1. Residues 190–209 (EKILKKDEENDSKAPPHELT) show a composition bias toward basic and acidic residues. 6 WD repeats span residues 277 to 326 (SKHR…TTPE), 330 to 370 (HCQS…RTPV), 379 to 420 (AHTH…HPQD), 429 to 469 (SKAV…AGIS), 474 to 519 (GHQG…PLYS), and 568 to 607 (EGNPALNRVRWTHSGREIAVGDSEGQIVIYDVGEQIAVPR).

This sequence belongs to the dynein intermediate chain family. In terms of assembly, homodimer. The cytoplasmic dynein 1 complex consists of two catalytic heavy chains (HCs) and a number of non-catalytic subunits presented by intermediate chains (ICs), light intermediate chains (LICs) and light chains (LCs); the composition seems to vary in respect to the IC, LIC and LC composition. The heavy chain homodimer serves as a scaffold for the probable homodimeric assembly of the respective non-catalytic subunits. The ICs and LICs bind directly to the HC dimer and the LCs assemble on the IC dimer. Interacts with DYNLT3. Interacts with DYNLT1. Interacts (dephosphorylated at Ser-90) with DCTN1. Interacts with BICD2. Interacts with SPEF2. Interacts with CFAP61. Post-translationally, the phosphorylation status of Ser-90 appears to be involved in dynactin-dependent target binding. In terms of processing, pyrophosphorylation by 5-diphosphoinositol pentakisphosphate (5-IP7) promotes interaction with DCTN1. Serine pyrophosphorylation is achieved by Mg(2+)-dependent, but enzyme independent transfer of a beta-phosphate from a inositol pyrophosphate to a pre-phosphorylated serine residue. As to expression, skeletal muscle, testis, kidney, brain, heart and spleen.

It localises to the cytoplasm. Its subcellular location is the cytoskeleton. In terms of biological role, acts as one of several non-catalytic accessory components of the cytoplasmic dynein 1 complex that are thought to be involved in linking dynein to cargos and to adapter proteins that regulate dynein function. Cytoplasmic dynein 1 acts as a motor for the intracellular retrograde motility of vesicles and organelles along microtubules. The intermediate chains mediate the binding of dynein to dynactin via its 150 kDa component (p150-glued) DCTN1. Involved in membrane-transport, such as Golgi apparatus, late endosomes and lysosomes. This Rattus norvegicus (Rat) protein is Cytoplasmic dynein 1 intermediate chain 2 (Dync1i2).